Consider the following 260-residue polypeptide: Neuraminyllactose-binding hemagglutinin (260 aa).

Residues 1–27 (MKTNGHFKDFAWKKCLLGASVGALLVG) form the signal peptide. A lipid anchor (N-palmitoyl cysteine) is attached at Cys-28. A lipid anchor (S-diacylglycerol cysteine) is attached at Cys-28. Residues 134-139 (KRTIQK) form an N-acetyl-neuraminyl-alpha(2,3)-lactose binding motif region.

The protein localises to the cell outer membrane. This Helicobacter pylori (Campylobacter pylori) protein is Neuraminyllactose-binding hemagglutinin (hpaA).